The following is a 926-amino-acid chain: Protein transport protein SEC24-2 (926 aa).

The segment at 1–54 is disordered; the sequence is MSHHKKRVYPQAQAQYGQSATPLQQPAQLVPPQDPAAAGMSYAQMGMPPQGAAA. Positions 20 to 54 are enriched in low complexity; sequence ATPLQQPAQLVPPQDPAAAGMSYAQMGMPPQGAAA. 4 residues coordinate Zn(2+): cysteine 231, cysteine 234, cysteine 253, and cysteine 256. The zinc finger-like stretch occupies residues 231–256; it reads CRRCRSYMNPFITFIEQGRRWRCNFC.

The protein belongs to the SEC23/SEC24 family. SEC24 subfamily. The COPII coat is composed of at least 5 proteins: the SEC23/24 complex, the SEC13/31 complex, and the protein SAR1. Golgi apparatus membrane; Peripheral membrane protein; Cytoplasmic side.

The protein localises to the cytoplasm. It localises to the cytoplasmic vesicle. It is found in the COPII-coated vesicle membrane. The protein resides in the endoplasmic reticulum membrane. Its subcellular location is the golgi apparatus membrane. Functionally, component of the coat protein complex II (COPII) which promotes the formation of transport vesicles from the endoplasmic reticulum (ER). The coat has two main functions, the physical deformation of the endoplasmic reticulum membrane into vesicles and the selection of cargo molecules. The polypeptide is Protein transport protein SEC24-2 (SEC242) (Saccharomyces uvarum (strain ATCC 76518 / CBS 7001 / CLIB 283 / NBRC 10550 / MCYC 623 / NCYC 2669 / NRRL Y-11845) (Yeast)).